Reading from the N-terminus, the 61-residue chain is uncharacterized protein (61 aa).

A coiled-coil region spans residues 24–60; that stretch reads WMRYESERDEKLRMLERMRDELEAELEEIKREIERLR.

This is an uncharacterized protein from Archaeoglobus fulgidus (strain ATCC 49558 / DSM 4304 / JCM 9628 / NBRC 100126 / VC-16).